The following is a 332-amino-acid chain: Ketol-acid reductoisomerase (NADP(+)) (332 aa).

Residues 1-182 (MAVIYYDKDC…GSNRAGVLET (182 aa)) form the KARI N-terminal Rossmann domain. Residues 25–28 (YGAQ) and 83–86 (DTSQ) contribute to the NADP(+) site. Residue H108 is part of the active site. An NADP(+)-binding site is contributed by G134. One can recognise a KARI C-terminal knotted domain in the interval 183–328 (TFAEETETDL…AELRSMMSWL (146 aa)). Mg(2+) is bound by residues D191, E195, E227, and E231. A substrate-binding site is contributed by S252.

It belongs to the ketol-acid reductoisomerase family. It depends on Mg(2+) as a cofactor.

It carries out the reaction (2R)-2,3-dihydroxy-3-methylbutanoate + NADP(+) = (2S)-2-acetolactate + NADPH + H(+). The catalysed reaction is (2R,3R)-2,3-dihydroxy-3-methylpentanoate + NADP(+) = (S)-2-ethyl-2-hydroxy-3-oxobutanoate + NADPH + H(+). Its pathway is amino-acid biosynthesis; L-isoleucine biosynthesis; L-isoleucine from 2-oxobutanoate: step 2/4. It participates in amino-acid biosynthesis; L-valine biosynthesis; L-valine from pyruvate: step 2/4. Its function is as follows. Involved in the biosynthesis of branched-chain amino acids (BCAA). Catalyzes an alkyl-migration followed by a ketol-acid reduction of (S)-2-acetolactate (S2AL) to yield (R)-2,3-dihydroxy-isovalerate. In the isomerase reaction, S2AL is rearranged via a Mg-dependent methyl migration to produce 3-hydroxy-3-methyl-2-ketobutyrate (HMKB). In the reductase reaction, this 2-ketoacid undergoes a metal-dependent reduction by NADPH to yield (R)-2,3-dihydroxy-isovalerate. This chain is Ketol-acid reductoisomerase (NADP(+)), found in Dehalococcoides mccartyi (strain ATCC BAA-2266 / KCTC 15142 / 195) (Dehalococcoides ethenogenes (strain 195)).